The following is a 171-amino-acid chain: Myosin regulatory light polypeptide 9 (171 aa).

The segment covering 1–15 (MSSKRAKAKTTKKRP) has biased composition (basic residues). The interval 1–21 (MSSKRAKAKTTKKRPQSATSN) is disordered. N-acetylserine is present on serine 2. Threonine 19 carries the phosphothreonine; by MLCK, CIT and ROCK2 modification. Serine 20 carries the post-translational modification Phosphoserine; by CDC42BP, CIT, MLCK, PAK1, ROCK1, ROCK2, DAPK1, DAPK2 and ZIPK/DAPK3. 2 EF-hand domains span residues 29–64 (SQIQ…LGKN) and 98–133 (DPED…MGDR). Positions 42, 44, 46, and 53 each coordinate Ca(2+).

Myosin is a hexamer of 2 heavy chains and 4 light chains: interacts with myosin heavy chain MYO19. Interacts with LUZP1; the interaction results in inhibition of phosphorylation of MYL9 by DAPK3. Phosphorylation increases the actin-activated myosin ATPase activity and thereby regulates the contractile activity. It is required to generate the driving force in the migration of the cells but not necessary for localization of myosin-2 at the leading edge. Phosphorylation is required for myotube formation. Phosphorylated by DAPK3; DAPK3-mediated phosphorylation is inhibited by LUZP1. Smooth muscle tissues and in some, but not all, nonmuscle cells.

The protein localises to the cytoplasm. The protein resides in the cytoskeleton. It is found in the cell cortex. Functionally, myosin regulatory subunit that plays an important role in regulation of both smooth muscle and nonmuscle cell contractile activity via its phosphorylation. Implicated in cytokinesis, receptor capping, and cell locomotion. In myoblasts, may regulate PIEZO1-dependent cortical actomyosin assembly involved in myotube formation. This is Myosin regulatory light polypeptide 9 (Myl9) from Rattus norvegicus (Rat).